The sequence spans 130 residues: Small ribosomal subunit protein uS9 (130 aa).

The protein belongs to the universal ribosomal protein uS9 family.

This chain is Small ribosomal subunit protein uS9, found in Paraburkholderia phytofirmans (strain DSM 17436 / LMG 22146 / PsJN) (Burkholderia phytofirmans).